Reading from the N-terminus, the 49-residue chain is Large ribosomal subunit protein bL33A (49 aa).

This sequence belongs to the bacterial ribosomal protein bL33 family.

This Bacillus licheniformis (strain ATCC 14580 / DSM 13 / JCM 2505 / CCUG 7422 / NBRC 12200 / NCIMB 9375 / NCTC 10341 / NRRL NRS-1264 / Gibson 46) protein is Large ribosomal subunit protein bL33A.